The chain runs to 1157 residues: Myosin tail region-interacting protein MTI1 (1157 aa).

Positions 5–69 (EVPFKVVAQF…PKSFVAVQGS (65 aa)) constitute an SH3 domain. Disordered regions lie at residues 68-116 (GSEV…GPVP) and 135-156 (TAVSAQVQHDSSSGNGERKVPM). Residues 77 to 89 (SSPNTGSTEQRTI) show a composition bias toward polar residues. Positions 93 to 110 (VEQKDLPEPISPETKKET) are enriched in basic and acidic residues. Position 103 is a phosphoserine (serine 103). Residues 138-149 (SAQVQHDSSSGN) are compositionally biased toward polar residues. Phosphoserine is present on residues serine 158 and serine 166. 2 disordered regions span residues 231–256 (PEPINRAQVESGRIETENDQLKKDLP) and 284–888 (KKAK…PKVA). Coiled coils occupy residues 234 to 301 (INRA…NKNE) and 356 to 430 (EKEQ…GASR). Basic and acidic residues-rich tracts occupy residues 242 to 256 (GRIETENDQLKKDLP), 284 to 296 (KKAKLEQEHERSA), and 312 to 383 (NEKT…RGEN). Positions 398–411 (EGDNDEEKEEEDSE) are enriched in acidic residues. Composition is skewed to basic and acidic residues over residues 412–423 (ENRRAALRERMA) and 506–524 (KTLDPHATTEHEQKQEHGT). Residues 544–558 (DSDEDTDDHEFEDAN) are compositionally biased toward acidic residues. Residue serine 565 is modified to Phosphoserine. Low complexity predominate over residues 574–585 (GNNESENVNSGE). A compositionally biased stretch (basic and acidic residues) spans 597–606 (RTAEVSHDIE). A compositionally biased stretch (polar residues) spans 607 to 641 (NSSQNTTGNVLPVSSPQTRVARNGSINSLTKSISG). Residues serine 621, serine 631, and serine 634 each carry the phosphoserine modification. Threonine 636 is modified (phosphothreonine). 2 positions are modified to phosphoserine: serine 638 and serine 647. Over residues 642–653 (ENRRKSINEYHD) the composition is skewed to basic and acidic residues. Residues 654–668 (TVSTNSSALTETAQD) show a composition bias toward polar residues. Composition is skewed to pro residues over residues 691-738 (PHPV…PVSS) and 747-765 (SIPPVPPTPPAPPAPPAPL). Basic and acidic residues predominate over residues 769–778 (KHNEVEEHVK). A compositionally biased stretch (pro residues) spans 795–808 (NTAPPLPRAPPVPP). The span at 832 to 853 (QNVTASTPSMMSTQQRVPTSVL) shows a compositional bias: polar residues. Threonine 850 carries the phosphothreonine modification. Phosphoserine is present on serine 889. Phosphothreonine occurs at positions 894 and 895. Lysine 1012 participates in a covalent cross-link: Glycyl lysine isopeptide (Lys-Gly) (interchain with G-Cter in ubiquitin).

As to quaternary structure, binds to the SH3 domains of the type I myosins MYO3 and MYO5.

The protein localises to the cytoplasm. It localises to the cytoskeleton. Its subcellular location is the actin patch. Involved in the regulation of actin cytoskeleton. The sequence is that of Myosin tail region-interacting protein MTI1 (BBC1) from Saccharomyces cerevisiae (strain ATCC 204508 / S288c) (Baker's yeast).